A 247-amino-acid chain; its full sequence is 2,3-bisphosphoglycerate-dependent phosphoglycerate mutase (247 aa).

Residues 8-15 (RHGESVWN), 21-22 (TG), Arg-60, 87-90 (ERHY), Lys-98, 114-115 (RR), and 183-184 (GN) contribute to the substrate site. The active-site Tele-phosphohistidine intermediate is the His-9. Glu-87 serves as the catalytic Proton donor/acceptor.

Belongs to the phosphoglycerate mutase family. BPG-dependent PGAM subfamily.

The enzyme catalyses (2R)-2-phosphoglycerate = (2R)-3-phosphoglycerate. Its pathway is carbohydrate degradation; glycolysis; pyruvate from D-glyceraldehyde 3-phosphate: step 3/5. In terms of biological role, catalyzes the interconversion of 2-phosphoglycerate and 3-phosphoglycerate. In Thermobifida fusca (strain YX), this protein is 2,3-bisphosphoglycerate-dependent phosphoglycerate mutase.